The following is a 573-amino-acid chain: MFTTPLPPQKRLSTQTEAIAKNITAIRSLDWDRDRFDIEFGLQNGTTYNSYLIQADKVALVDSSHEKFRQLYLDLLQGLIDPQRIDYLIVSHTEPDHSGLVKDILQLNPRITVVATKVALQFLDNFVHQPFERIQVKSGDRLDLGQGHDLEFVSAPNLHWPDTMLTYDPATEILFTCDVFGMHYCSDAVFDIDLGKIAPDYQFYYDCLMGPNARSVLAAMKRMDNLGTISTVANGHGPLLRHNVGELLHRYRHWSESQSKAEKTVVVFYVADYGYGDRLSQAIAKGITKTGVGVDMVDLSSADPQEIQELVGHASGVVLGMPPLQANADLSTNFGAVLAAMQPKQVFGLYESYGGDDEPIDPLRTKFLDLGLREAFKVIKVKDTPSESTYQLCDESGTDLGQNLIQAAKIKQLKSLDSDLEKAIGRISGGLYIITAQKGEVKGAMLASWVSQASFNPPGFTVAVAKDRAIESLMQVGDRFVLNILEEGNYQILMKHFLKRFPPGADRFAGVKTQTASNGSPILTDALAYLECEVASRMECSDHWIVYSQVTNGRVAKAEGLTAVHHRKVGNYY.

The segment at 43-236 (QNGTTYNSYL…GTISTVANGH (194 aa)) is zinc metallo-hydrolase. Positions 92, 94, 96, 159, 178, and 236 each coordinate Fe cation. Residues 265–401 (VVVFYVADYG…LCDESGTDLG (137 aa)) enclose the Flavodoxin-like domain. Residues 424-573 (IGRISGGLYI…VHHRKVGNYY (150 aa)) form a flavodoxin-reductase-like region.

The protein in the N-terminal section; belongs to the zinc metallo-hydrolase group 3 family. It in the C-terminal section; belongs to the flavodoxin reductase family. In terms of assembly, homodimer. Fe cation is required as a cofactor. It depends on FAD as a cofactor. The cofactor is FMN.

Mediates electron transfer from NADH to oxygen, reducing it to water. This modular protein has 3 redox cofactors, in other organisms the same activity requires 2 or 3 proteins. The protein is Diflavin flavoprotein A 1 (dfa1) of Synechocystis sp. (strain ATCC 27184 / PCC 6803 / Kazusa).